We begin with the raw amino-acid sequence, 195 residues long: 22.0 kDa heat shock protein (195 aa).

Positions Met-1–Thr-21 are cleaved as a signal peptide. Residues Arg-62 to Glu-180 form the sHSP domain. N-linked (GlcNAc...) asparagine glycosylation is present at Asn-160.

This sequence belongs to the small heat shock protein (HSP20) family. May form oligomeric structures.

It is found in the endoplasmic reticulum. In Arabidopsis thaliana (Mouse-ear cress), this protein is 22.0 kDa heat shock protein (HSP22.0).